Here is a 312-residue protein sequence, read N- to C-terminus: Acetyl-coenzyme A carboxylase carboxyl transferase subunit alpha (312 aa).

The region spanning 36–286 (RLDKEVKSIY…KEYFLDALRT (251 aa)) is the CoA carboxyltransferase C-terminal domain.

The protein belongs to the AccA family. Acetyl-CoA carboxylase is a heterohexamer composed of biotin carboxyl carrier protein (AccB), biotin carboxylase (AccC) and two subunits each of ACCase subunit alpha (AccA) and ACCase subunit beta (AccD).

The protein resides in the cytoplasm. The catalysed reaction is N(6)-carboxybiotinyl-L-lysyl-[protein] + acetyl-CoA = N(6)-biotinyl-L-lysyl-[protein] + malonyl-CoA. It participates in lipid metabolism; malonyl-CoA biosynthesis; malonyl-CoA from acetyl-CoA: step 1/1. Functionally, component of the acetyl coenzyme A carboxylase (ACC) complex. First, biotin carboxylase catalyzes the carboxylation of biotin on its carrier protein (BCCP) and then the CO(2) group is transferred by the carboxyltransferase to acetyl-CoA to form malonyl-CoA. The polypeptide is Acetyl-coenzyme A carboxylase carboxyl transferase subunit alpha (Helicobacter pylori (strain J99 / ATCC 700824) (Campylobacter pylori J99)).